We begin with the raw amino-acid sequence, 285 residues long: Small ribosomal subunit protein uS2 (285 aa).

Residues 262-285 (NDDWNEDDTAPAAPGAASWGGAAF) form a disordered region. Residues 271–285 (APAAPGAASWGGAAF) show a composition bias toward low complexity.

Belongs to the universal ribosomal protein uS2 family. In terms of assembly, component of the small ribosomal subunit. Mature ribosomes consist of a small (40S) and a large (60S) subunit. The 40S subunit contains about 33 different proteins and 1 molecule of RNA (18S). The 60S subunit contains about 49 different proteins and 3 molecules of RNA (28S, 5.8S and 5S). Interacts with ribosomal protein S21.

It is found in the cytoplasm. Functionally, required for the assembly and/or stability of the 40S ribosomal subunit. Required for the processing of the 20S rRNA-precursor to mature 18S rRNA in a late step of the maturation of 40S ribosomal subunits. This Anopheles gambiae (African malaria mosquito) protein is Small ribosomal subunit protein uS2.